A 452-amino-acid polypeptide reads, in one-letter code: Disintegrin and metalloproteinase domain-containing protein 11 (452 aa).

The region spanning 1 to 120 (RRHHSPLLVS…GGGSCLFNKP (120 aa)) is the Peptidase M12B domain. The Extracellular segment spans residues 1 to 417 (RRHHSPLLVS…EKYKGPSGTN (417 aa)). 3 cysteine pairs are disulfide-bonded: Cys-31-Cys-115, Cys-74-Cys-99, and Cys-76-Cys-83. A Disintegrin domain is found at 126-214 (PPSCGNGFIE…ACPANLHKQD (89 aa)). Asn-149 carries an N-linked (GlcNAc...) asparagine glycan. Cys-186 and Cys-206 form a disulfide bridge. Residues Asn-288 and Asn-356 are each glycosylated (N-linked (GlcNAc...) asparagine). Cystine bridges form between Cys-360/Cys-375, Cys-369/Cys-381, and Cys-383/Cys-392. The region spanning 360 to 416 (CPGSWNGVICSDHGVCSNEGKCICHPEWTGKDCSVYDPLPVPKPTGVVEKYKGPSGT) is the EGF-like domain. The chain crosses the membrane as a helical span at residues 418-438 (IIIGSIAGAVLIAAIVLGGTG). Residues 439–452 (WGFKNIRRGRSGGG) are Cytoplasmic-facing.

Post-translationally, the precursor is cleaved by a furin endopeptidase. Detected in testis and barely expressed in heart and muscle. Not detectable in liver.

The protein localises to the presynaptic cell membrane. The protein resides in the perikaryon. It is found in the cell projection. It localises to the axon. In terms of biological role, probable ligand for integrin in the brain. This is a non-catalytic metalloprotease-like protein. This Xenopus laevis (African clawed frog) protein is Disintegrin and metalloproteinase domain-containing protein 11 (adam11).